The sequence spans 473 residues: LEC14B protein (473 aa).

WD repeat units lie at residues 212 to 242, 254 to 285, 301 to 331, 377 to 413, and 425 to 455; these read GYSF…CVYD, AHES…KVWD, GHLE…KLWD, GHSV…YIYD, and YHKA…VKWE.

It belongs to the WD repeat LEC14B family.

The sequence is that of LEC14B protein from Lithospermum erythrorhizon (Purple gromwell).